A 314-amino-acid polypeptide reads, in one-letter code: MSDSLRIIFAGTPDFAARHLDALLSSGHQIVGVFTQPDRPAGRGNKLTPSPVKVLAEQHHLPVFQPKSLRPEENQHLVADLNADVMVVVAYGLILPKAVLDMPRLGCINVHGSLLPRWRGAAPIQRSLWAGDHETGVTIMQMDVGLDTGDMMHKIACPIEADDTSASLYDKLAQLGPQGMLTTLQQMAAGTAKREVQDESLVTYAEKLSKEEARLDWNLPAVQLERCVRAFNPWPVSYFTIDDQPVKVWQATVLAQNADAEPGTIIHADKHGIQVATAEGILNLTQLQPAGKKPMSAQDLLNSRREWFTPGNRL.

Serine 113–proline 116 contacts (6S)-5,6,7,8-tetrahydrofolate.

This sequence belongs to the Fmt family.

The enzyme catalyses L-methionyl-tRNA(fMet) + (6R)-10-formyltetrahydrofolate = N-formyl-L-methionyl-tRNA(fMet) + (6S)-5,6,7,8-tetrahydrofolate + H(+). Functionally, attaches a formyl group to the free amino group of methionyl-tRNA(fMet). The formyl group appears to play a dual role in the initiator identity of N-formylmethionyl-tRNA by promoting its recognition by IF2 and preventing the misappropriation of this tRNA by the elongation apparatus. The sequence is that of Methionyl-tRNA formyltransferase from Serratia proteamaculans (strain 568).